Consider the following 80-residue polypeptide: uncharacterized protein (80 aa).

This is an uncharacterized protein from Acidianus filamentous virus 1 (isolate United States/Yellowstone) (AFV-1).